Here is a 291-residue protein sequence, read N- to C-terminus: Undecaprenyl-diphosphatase 2 (291 aa).

A run of 6 helical transmembrane segments spans residues 39–59, 85–105, 118–138, 198–218, 231–251, and 262–282; these read PGAA…LIYF, ARMG…GLTL, ITAT…RMAA, AARY…VFEL, PTLF…AWFM, and FVWY…VGVL.

Belongs to the UppP family.

The protein localises to the cell membrane. The catalysed reaction is di-trans,octa-cis-undecaprenyl diphosphate + H2O = di-trans,octa-cis-undecaprenyl phosphate + phosphate + H(+). Its function is as follows. Catalyzes the dephosphorylation of undecaprenyl diphosphate (UPP). Confers resistance to bacitracin. This is Undecaprenyl-diphosphatase 2 from Streptomyces coelicolor (strain ATCC BAA-471 / A3(2) / M145).